The primary structure comprises 123 residues: Ribosome-binding factor A (123 aa).

The protein belongs to the RbfA family. In terms of assembly, monomer. Binds 30S ribosomal subunits, but not 50S ribosomal subunits or 70S ribosomes.

The protein resides in the cytoplasm. In terms of biological role, one of several proteins that assist in the late maturation steps of the functional core of the 30S ribosomal subunit. Associates with free 30S ribosomal subunits (but not with 30S subunits that are part of 70S ribosomes or polysomes). Required for efficient processing of 16S rRNA. May interact with the 5'-terminal helix region of 16S rRNA. This chain is Ribosome-binding factor A, found in Ralstonia pickettii (strain 12J).